We begin with the raw amino-acid sequence, 80 residues long: Defensin-like protein 276 (80 aa).

A signal peptide spans 1 to 24 (MSGQKYQLVSLLLIICLLFSQSTA). 4 disulfide bridges follow: C27–C67, C33–C55, C39–C65, and C43–C66.

The protein belongs to the DEFL family.

Its subcellular location is the secreted. The chain is Defensin-like protein 276 from Arabidopsis thaliana (Mouse-ear cress).